Reading from the N-terminus, the 53-residue chain is MTKYVCTVCGYVYDPEVGDPDNNINPGTSFQDIPEDWVCPLCGVGKDQFEEEA.

The Rubredoxin-like domain maps to 1-53 (MTKYVCTVCGYVYDPEVGDPDNNINPGTSFQDIPEDWVCPLCGVGKDQFEEEA). Residues Cys6, Cys9, Cys39, and Cys42 each contribute to the Fe cation site.

It belongs to the rubredoxin family. Fe(3+) serves as cofactor.

Functionally, rubredoxin is a small nonheme, iron protein lacking acid-labile sulfide. Its single Fe, chelated to 4 Cys, functions as an electron acceptor and may also stabilize the conformation of the molecule. The sequence is that of Rubredoxin from Acetoanaerobium sticklandii (strain ATCC 12662 / DSM 519 / JCM 1433 / CCUG 9281 / NCIMB 10654 / HF) (Clostridium sticklandii).